The following is a 131-amino-acid chain: DNA-directed RNA polymerase subunit omega (131 aa).

The protein belongs to the RNA polymerase subunit omega family. As to quaternary structure, the RNAP catalytic core consists of 2 alpha, 1 beta, 1 beta' and 1 omega subunit. When a sigma factor is associated with the core the holoenzyme is formed, which can initiate transcription.

The catalysed reaction is RNA(n) + a ribonucleoside 5'-triphosphate = RNA(n+1) + diphosphate. Its function is as follows. Promotes RNA polymerase assembly. Latches the N- and C-terminal regions of the beta' subunit thereby facilitating its interaction with the beta and alpha subunits. This is DNA-directed RNA polymerase subunit omega from Chelativorans sp. (strain BNC1).